The sequence spans 1472 residues: MRRSNVVPVHSLTSSTNTGRDSRGEKYDELTPVATRRASISPDEARYLTQLASRDNAVSRVSTVADISLDDPALNPENKDFDLYKWLRKVVHVLNEEGVPRKEASIFFQHLRVSGTGAALQLQKTVADIITAPFRRETWNFRNKTSKTILHDFNGMLHSGELLIVLGRPGSGCSTFLKTLSGELHGLNVDEKTVLHYSGIPQSTMIKEFKGEVVYNQEVDKHFPHLTVGQTLEFAAAVRTPSKRLGGMSRNEYAQMMTKVVMAVFGLSHTYNTKVGNDTVRGVPGGERKRVSIAEMALAGAPLAAWDNSTRGLDSATALKFVESLRLAADLNSSAHAVAIYQASQAIYDLFDKAVVLYEGRQIYFGPASKAKAFFERQGWFCPPRQTTGDFLTSVTNPIERQARPGMESQVPRTAAEFEAYWLESEEYKELQREMAAFQGETSSQGNEKLLEFQQRKRLAQASHTRPKSPYLLSIPMQIKLNTKRAYQRVWNERTSTMTTFIGNTILALIVGSVFYGTPTATAGFYAKGATLFYAVLLNALTAMTEINSLYSQRPIVEKHASFAFYHPATEAIAGVVSDIPVKFLMAIAFNIILYFLSGLRREPSQFFIYFLITFIIMFVMSAVFRTMAAITRTVSQAMTLAGVLILMLVIYTGFVVPVNYMHPWFKWIHYLNPIFYAFEILIANEFHGREFTCSQFIPVYPNLPGDSFVCSSRGAVAGRRTVSGDAYIEASYSYSYSHVWRNFGILIAFLIGFMVIYFVATELNSATTSSAEVLVFRRGHEPAHLKNGHEPGADEEAGAGKTVVSSSAEENKQDQGITSIPPQQDIFTWRDVVYDIEIKGEPRRLLDHVSGWVKPGTLTALMGVSGAGKTTLLDVLAHRTTMGVITGDMFVNGKPLDSSFQRKTGYVQQQDLHLETATVRESLRFSAMLRQPASVSKEEKYAYVEEVIKMLNMEDFAEAVVGVPGEGLNVEQRKLLTIGVELAAKPKLLLFLDEPTSGLDSQSSWAICNFLRKLADAGQAILCTIHQPSAILFEQFDQLLFLARGGKTVYFGPIGENSQTLLKYFESHGPRRCGDQENPAEYMLEVVNAGTNPRGENWFDLWKASKEAAGVQAEIDRIHESKRGEAESKDSTNPKDREHEEFAMPFFKQLPIVTVRVFQQYWRLPMYIAAKMMLGICAGLFIGFSFFKADTSLQGMQNVIFSVFMLCAIFSSLVQQIIPLFITQRALYEVRERPSKTYSWKAFMIANIIVEIPYQILMGILVFGCYYYAVNGVQSSDRQGLVLLFCIQFFIYASTFADFVIAALPDAETAGAIVTLQFSMALTFNGVMQTPEALPGFWIFMYRVSPFTYWVGGMAATQLHGRAVKCSAAETAIFNPPSGLTCQEYMADYMAVAPGHLSNPNATSSCEFCSLSVADQYLASVNIYWSERWRNFGIFWAYVVFDIAVAVMLYYCFRVKKWNFSFGKRKKSKAA.

Residues 1–28 (MRRSNVVPVHSLTSSTNTGRDSRGEKYD) form a disordered region. The ABC transporter 1 domain maps to 134–384 (FRRETWNFRN…FERQGWFCPP (251 aa)). Asparagine 143, asparagine 277, asparagine 308, and asparagine 332 each carry an N-linked (GlcNAc...) asparagine glycan. The next 7 membrane-spanning stretches (helical) occupy residues 506–526 (ILALIVGSVFYGTPTATAGFY), 530–550 (ATLFYAVLLNALTAMTEINSL), 580–600 (IPVKFLMAIAFNIILYFLSGL), 605–625 (SQFFIYFLITFIIMFVMSAVF), 639–659 (MTLAGVLILMLVIYTGFVVPV), 664–684 (PWFKWIHYLNPIFYAFEILIA), and 744–764 (FGILIAFLIGFMVIYFVATEL). A compositionally biased stretch (basic and acidic residues) spans 784-793 (AHLKNGHEPG). A disordered region spans residues 784–821 (AHLKNGHEPGADEEAGAGKTVVSSSAEENKQDQGITSI). A compositionally biased stretch (polar residues) spans 804–821 (VVSSSAEENKQDQGITSI). One can recognise an ABC transporter 2 domain in the interval 828–1070 (FTWRDVVYDI…TLLKYFESHG (243 aa)). 864 to 871 (GVSGAGKT) provides a ligand contact to ATP. 6 helical membrane passes run 1168–1188 (YIAAKMMLGICAGLFIGFSFF), 1204–1224 (VFMLCAIFSSLVQQIIPLFIT), 1244–1264 (FMIANIIVEIPYQILMGILVF), 1282–1302 (LVLLFCIQFFIYASTFADFVI), 1309–1329 (ETAGAIVTLQFSMALTFNGVM), and 1337–1357 (GFWIFMYRVSPFTYWVGGMAA). A glycan (N-linked (GlcNAc...) asparagine) is linked at asparagine 1402. The chain crosses the membrane as a helical span at residues 1433–1453 (FGIFWAYVVFDIAVAVMLYYC). Asparagine 1460 is a glycosylation site (N-linked (GlcNAc...) asparagine).

Belongs to the ABC transporter superfamily. ABCG family. PDR (TC 3.A.1.205) subfamily.

It localises to the cell membrane. The enzyme catalyses itraconazole(in) + ATP + H2O = itraconazole(out) + ADP + phosphate + H(+). The catalysed reaction is voriconazole(in) + ATP + H2O = voriconazole(out) + ADP + phosphate + H(+). It catalyses the reaction fluconazole(in) + ATP + H2O = fluconazole(out) + ADP + phosphate + H(+). Its function is as follows. Pleiotropic ABC efflux transporter involved in the basal level of azole susceptibility. Confers resistance to fluconazole, itraconazole and voriconazole. The polypeptide is ABC multidrug transporter atrI (Aspergillus fumigatus (strain ATCC MYA-4609 / CBS 101355 / FGSC A1100 / Af293) (Neosartorya fumigata)).